The chain runs to 302 residues: Nucleotide-binding protein BceJ2315_08000 (302 aa).

8-15 (GISGSGKS) contributes to the ATP binding site. 57–60 (DARS) contributes to the GTP binding site.

This sequence belongs to the RapZ-like family.

Its function is as follows. Displays ATPase and GTPase activities. In Burkholderia cenocepacia (strain ATCC BAA-245 / DSM 16553 / LMG 16656 / NCTC 13227 / J2315 / CF5610) (Burkholderia cepacia (strain J2315)), this protein is Nucleotide-binding protein BceJ2315_08000.